The chain runs to 477 residues: tRNA-2-methylthio-N(6)-dimethylallyladenosine synthase (477 aa).

One can recognise an MTTase N-terminal domain in the interval 3–120 (KKLYIKTWGC…LPEMINELKG (118 aa)). 6 residues coordinate [4Fe-4S] cluster: cysteine 12, cysteine 49, cysteine 83, cysteine 157, cysteine 161, and cysteine 164. Residues 143–375 (RAEGPTAFVS…QQRITQQALR (233 aa)) form the Radical SAM core domain. One can recognise a TRAM domain in the interval 378-441 (RHMVGTEQRI…TNSLRGEVVR (64 aa)).

This sequence belongs to the methylthiotransferase family. MiaB subfamily. In terms of assembly, monomer. Requires [4Fe-4S] cluster as cofactor.

The protein resides in the cytoplasm. It catalyses the reaction N(6)-dimethylallyladenosine(37) in tRNA + (sulfur carrier)-SH + AH2 + 2 S-adenosyl-L-methionine = 2-methylsulfanyl-N(6)-dimethylallyladenosine(37) in tRNA + (sulfur carrier)-H + 5'-deoxyadenosine + L-methionine + A + S-adenosyl-L-homocysteine + 2 H(+). In terms of biological role, catalyzes the methylthiolation of N6-(dimethylallyl)adenosine (i(6)A), leading to the formation of 2-methylthio-N6-(dimethylallyl)adenosine (ms(2)i(6)A) at position 37 in tRNAs that read codons beginning with uridine. This is tRNA-2-methylthio-N(6)-dimethylallyladenosine synthase from Alteromonas mediterranea (strain DSM 17117 / CIP 110805 / LMG 28347 / Deep ecotype).